The chain runs to 214 residues: Large ribosomal subunit protein uL4 (214 aa).

The disordered stretch occupies residues 43-83 (RRQAGTHKAKSRSEVNRTTKKSIKQKGSGGARHGSRNAPIF).

The protein belongs to the universal ribosomal protein uL4 family. In terms of assembly, part of the 50S ribosomal subunit.

One of the primary rRNA binding proteins, this protein initially binds near the 5'-end of the 23S rRNA. It is important during the early stages of 50S assembly. It makes multiple contacts with different domains of the 23S rRNA in the assembled 50S subunit and ribosome. Functionally, forms part of the polypeptide exit tunnel. This Hyphomonas neptunium (strain ATCC 15444) protein is Large ribosomal subunit protein uL4.